The following is a 75-amino-acid chain: uncharacterized protein (75 aa).

Positions 1-14 (MNDNNDNNNNNKNI) are enriched in low complexity. The interval 1–30 (MNDNNDNNNNNKNIDNVDDDNDDNDKGKYK) is disordered.

This is an uncharacterized protein from Dictyostelium discoideum (Social amoeba).